The sequence spans 251 residues: D-aminoacyl-tRNA deacylase (251 aa).

This sequence belongs to the DtdA deacylase family. As to quaternary structure, monomer. It depends on Zn(2+) as a cofactor.

It carries out the reaction a D-aminoacyl-tRNA + H2O = a tRNA + a D-alpha-amino acid + H(+). The catalysed reaction is glycyl-tRNA(Ala) + H2O = tRNA(Ala) + glycine + H(+). Functionally, D-aminoacyl-tRNA deacylase with broad substrate specificity. By recycling D-aminoacyl-tRNA to D-amino acids and free tRNA molecules, this enzyme counteracts the toxicity associated with the formation of D-aminoacyl-tRNA entities in vivo. In Pyrobaculum calidifontis (strain DSM 21063 / JCM 11548 / VA1), this protein is D-aminoacyl-tRNA deacylase.